The sequence spans 247 residues: Putative cyclin-T1-1 (247 aa).

It belongs to the cyclin family. Cyclin T subfamily.

The sequence is that of Putative cyclin-T1-1 (CYCT1-1) from Arabidopsis thaliana (Mouse-ear cress).